A 111-amino-acid chain; its full sequence is Antitoxin PrlF (111 aa).

One can recognise a SpoVT-AbrB domain in the interval Thr-12–Asp-59.

In terms of assembly, homodimer; forms a complex with YhaV with stoichiometry PrlF(2)-YhaV(4), possibly as a YhaV(2)-PrlF(2)-YhaV(2) complex like the MazFE complex. This complex is seen to dimerize in solution.

The protein resides in the cytoplasm. Antitoxin component of a type II toxin-antitoxin (TA) system. Labile antitoxin that binds to the YhaV toxin and neutralizes its ribonuclease activity. Also acts as a transcription factor. The YhaV/PrlF complex binds the prlF-yhaV operon, probably negatively regulating its expression. In terms of biological role, negatively regulates its own expression as well as relieving the export block imposed by high-level synthesis of the LamB-LacZ hybrid protein. Overexpression leads to increased doubling time and also suppresses a htrA (degP) null phenotype. This Escherichia coli (strain K12) protein is Antitoxin PrlF (prlF).